Consider the following 781-residue polypeptide: Cytosolic phospholipase A2 beta (781 aa).

Residues 1–112 form the C2 domain; the sequence is MAVAEVSRTC…RAGEFRRESF (112 aa). Positions 26, 32, 82, 84, and 90 each coordinate Ca(2+). The region spanning 246-781 is the PLA2c domain; it reads EAGLRELAVR…VQRRRQRRPH (536 aa). Serine 335 (nucleophile) is an active-site residue. The Proton acceptor role is filled by aspartate 615.

Ca(2+) is required as a cofactor. Widely expressed. Expressed at higher level in brain, heart, liver, cerebellum and pancreas.

Its subcellular location is the cytoplasm. The protein localises to the cytosol. It localises to the mitochondrion membrane. The protein resides in the early endosome membrane. The enzyme catalyses a 1,2-diacyl-sn-glycero-3-phosphocholine + H2O = a 1-acyl-sn-glycero-3-phosphocholine + a fatty acid + H(+). It carries out the reaction a 1-acyl-sn-glycero-3-phosphocholine + H2O = sn-glycerol 3-phosphocholine + a fatty acid + H(+). The catalysed reaction is 1-hexadecanoyl-2-(9Z,12Z-octadecadienoyl)-sn-glycero-3-phosphoethanolamine + H2O = 1-hexadecanoyl-sn-glycero-3-phosphoethanolamine + (9Z,12Z)-octadecadienoate + H(+). It catalyses the reaction 1-hexadecanoyl-2-(5Z,8Z,11Z,14Z-eicosatetraenoyl)-sn-glycero-3-phosphoethanolamine + H2O = 1-hexadecanoyl-sn-glycero-3-phosphoethanolamine + (5Z,8Z,11Z,14Z)-eicosatetraenoate + H(+). The enzyme catalyses 1-hexadecanoyl-sn-glycero-3-phosphocholine + H2O = sn-glycerol 3-phosphocholine + hexadecanoate + H(+). It carries out the reaction 1-hexadecanoyl-2-(5Z,8Z,11Z,14Z-eicosatetraenoyl)-sn-glycero-3-phosphocholine + H2O = 1-hexadecanoyl-sn-glycero-3-phosphocholine + (5Z,8Z,11Z,14Z)-eicosatetraenoate + H(+). The catalysed reaction is 1-hexadecanoyl-2-(5Z,8Z,11Z,14Z-eicosatetraenoyl)-sn-glycero-3-phosphocholine + H2O = 2-(5Z,8Z,11Z,14Z)-eicosatetraenoyl-sn-glycero-3-phosphocholine + hexadecanoate + H(+). Its activity is regulated as follows. Stimulated by cytosolic Ca(2+). Functionally, calcium-dependent phospholipase A1 and A2 and lysophospholipase that may play a role in membrane phospholipid remodeling. Calcium-dependent phospholipase A2 and lysophospholipase. Cleaves the ester bond of the fatty acyl group attached to the sn-2 position of phosphatidylethanolamines, producing lysophospholipids that may be used in deacylation-reacylation cycles. Hydrolyzes lysophosphatidylcholines with low efficiency but is inefficient toward phosphatidylcholines. Its function is as follows. Calcium-dependent phospholipase A1 and A2 and lysophospholipase. Cleaves the ester bond of the fatty acyl group attached to the sn-1 or sn-2 position of diacyl phospholipids (phospholipase A1 and A2 activity, respectively), producing lysophospholipids that may be used in deacylation-reacylation cycles. Can further hydrolyze lysophospholipids enabling complete deacylation. Has no activity toward alkylacyl phospholipids. This is Cytosolic phospholipase A2 beta (PLA2G4B) from Homo sapiens (Human).